A 568-amino-acid chain; its full sequence is Type 3 secretion system secretin (568 aa).

The signal sequence occupies residues 1-15 (MAAALLLWTAGTVCA). Residues 203–292 (YGGDGPSDSG…RGSTPIIRAD (90 aa)) are disordered. The segment covering 243–257 (LGGGKSPLPPGGTGQ) has biased composition (gly residues). Residues 273–284 (NRLRSDELDDRG) are compositionally biased toward basic and acidic residues.

It belongs to the bacterial secretin family. T3SS SctC subfamily. As to quaternary structure, the core secretion machinery of the T3SS is composed of approximately 20 different proteins, including cytoplasmic components, a base, an export apparatus and a needle. This subunit is part of the base, which anchors the injectisome in the bacterial cell envelope. Forms a stable homooligomeric complex.

The protein resides in the cell outer membrane. Functionally, component of the type III secretion system (T3SS), also called injectisome, which is used to inject bacterial effector proteins into eukaryotic host cells. Forms a ring-shaped multimeric structure with an apparent central pore in the outer membrane. In Ralstonia nicotianae (strain ATCC BAA-1114 / GMI1000) (Ralstonia solanacearum), this protein is Type 3 secretion system secretin.